The sequence spans 299 residues: Oxygen-dependent coproporphyrinogen-III oxidase (299 aa).

Ser-92 is a binding site for substrate. His-96 and His-106 together coordinate a divalent metal cation. Residue His-106 is the Proton donor of the active site. Position 108-110 (108-110 (NVR)) interacts with substrate. A divalent metal cation contacts are provided by His-145 and His-175. An important for dimerization region spans residues 240–275 (YVEFNLVWDRGTLFGLQTGGRTESILMSMPPLVRWE). Residue 258–260 (GGR) coordinates substrate.

It belongs to the aerobic coproporphyrinogen-III oxidase family. In terms of assembly, homodimer. It depends on a divalent metal cation as a cofactor.

It localises to the cytoplasm. The catalysed reaction is coproporphyrinogen III + O2 + 2 H(+) = protoporphyrinogen IX + 2 CO2 + 2 H2O. It participates in porphyrin-containing compound metabolism; protoporphyrin-IX biosynthesis; protoporphyrinogen-IX from coproporphyrinogen-III (O2 route): step 1/1. In terms of biological role, involved in the heme biosynthesis. Catalyzes the aerobic oxidative decarboxylation of propionate groups of rings A and B of coproporphyrinogen-III to yield the vinyl groups in protoporphyrinogen-IX. The protein is Oxygen-dependent coproporphyrinogen-III oxidase of Salmonella paratyphi B (strain ATCC BAA-1250 / SPB7).